Reading from the N-terminus, the 206-residue chain is LexA repressor (206 aa).

Residues 28–48 (RAEIAKRLGFKSANAAEEHLK) constitute a DNA-binding region (H-T-H motif). Catalysis depends on for autocatalytic cleavage activity residues Ser123 and Lys160.

It belongs to the peptidase S24 family. As to quaternary structure, homodimer.

The enzyme catalyses Hydrolysis of Ala-|-Gly bond in repressor LexA.. In terms of biological role, represses a number of genes involved in the response to DNA damage (SOS response), including recA and lexA. In the presence of single-stranded DNA, RecA interacts with LexA causing an autocatalytic cleavage which disrupts the DNA-binding part of LexA, leading to derepression of the SOS regulon and eventually DNA repair. The sequence is that of LexA repressor from Shewanella sediminis (strain HAW-EB3).